A 405-amino-acid polypeptide reads, in one-letter code: L-rhamnonate dehydratase (405 aa).

Residues His33 and Arg59 each coordinate substrate. Mg(2+) contacts are provided by Asp226, Glu252, and Glu280. The Proton acceptor role is filled by His329. Glu349 contributes to the substrate binding site.

This sequence belongs to the mandelate racemase/muconate lactonizing enzyme family. RhamD subfamily. As to quaternary structure, homooctamer; tetramer of dimers. Mg(2+) serves as cofactor.

The catalysed reaction is L-rhamnonate = 2-dehydro-3-deoxy-L-rhamnonate + H2O. Its function is as follows. Catalyzes the dehydration of L-rhamnonate to 2-keto-3-deoxy-L-rhamnonate (KDR). This chain is L-rhamnonate dehydratase, found in Escherichia coli O45:K1 (strain S88 / ExPEC).